The chain runs to 295 residues: Protease HtpX (295 aa).

Transmembrane regions (helical) follow at residues 4–24 (ILLFVATNLAVVLVASITLSL) and 41–61 (GQLLVFCAVFGFAGSLVSLFI). H147 provides a ligand contact to Zn(2+). Residue E148 is part of the active site. H151 serves as a coordination point for Zn(2+). The next 2 membrane-spanning stretches (helical) occupy residues 158 to 178 (VTMALVQGVVNTFVMFFARII) and 198 to 218 (FVATIVAELVLGILASIIVMW). A Zn(2+)-binding site is contributed by E224.

This sequence belongs to the peptidase M48B family. The cofactor is Zn(2+).

Its subcellular location is the cell inner membrane. In Pseudomonas entomophila (strain L48), this protein is Protease HtpX.